The sequence spans 490 residues: Metal cation symporter ZIP14 (490 aa).

Residues 1–28 form the signal peptide; sequence MELLRPALPSYFLLTLLSIWTAASEARA. Residues 29-155 are Extracellular-facing; sequence VSTGMPTISA…PSSVEVWGYG (127 aa). N-linked (GlcNAc...) asparagine glycosylation is found at asparagine 75, asparagine 85, and asparagine 100. Residues 127–146 form a disordered region; the sequence is ACSSENQENEENEQTEEGRP. A helical transmembrane segment spans residues 156–176; the sequence is LLCVTVISLCSLLGASVVPFM. At 177–184 the chain is on the cytoplasmic side; that stretch reads KKTFYKRL. The helical transmembrane segment at 185–205 threads the bilayer; it reads LLYFIALAIGTLYSNALFQLI. Residues 206–222 are Extracellular-facing; that stretch reads PEAFGFNPMEDYYVSKS. Residues 223 to 243 form a helical membrane-spanning segment; the sequence is AVVFGGFYLFFFTEKILKMLL. Residues 244-395 are Cytoplasmic-facing; it reads KQKNEHHHGH…LLNAGMSLQQ (152 aa). The HHHGHXHX-motif motif lies at 249 to 256; it reads HHHGHSHY. The short motif at 374-379 is the XEXPHE-motif element; the sequence is EEFPHE. A helical transmembrane segment spans residues 396-416; sequence ALFFNFLSACCCYVGLGFGIL. Over 417-422 the chain is Extracellular; that stretch reads AGSHFS. The chain crosses the membrane as a helical span at residues 423-443; it reads ANWIFALAGGMFLYISLADMF. Residues 444–459 are Cytoplasmic-facing; the sequence is PEMNEVSQEDERKGSA. Residues 460 to 480 form a helical membrane-spanning segment; sequence LIPFVIQNLGLLTGFGIMLVL. Residues 481–490 are Extracellular-facing; that stretch reads TMYSGHIQIG.

This sequence belongs to the ZIP transporter (TC 2.A.5) family. As to quaternary structure, homotrimer. Post-translationally, ubiquitinated. Ubiquitination occurs upon iron depletion. The ubiquitinated form undergoes proteasomal degradation. N-glycosylated. N-glycosylation at Asn-100 is required for iron-regulated extraction of the transporter from membranes and subsequent proteasomal degradation.

Its subcellular location is the cell membrane. The protein localises to the apical cell membrane. It localises to the basolateral cell membrane. The protein resides in the early endosome membrane. It is found in the late endosome membrane. Its subcellular location is the lysosome membrane. The catalysed reaction is Zn(2+)(out) + 2 hydrogencarbonate(out) = Zn(2+)(in) + 2 hydrogencarbonate(in). It carries out the reaction Mn(2+)(out) + 2 hydrogencarbonate(out) = Mn(2+)(in) + 2 hydrogencarbonate(in). The enzyme catalyses Fe(2+)(out) + 2 hydrogencarbonate(out) = Fe(2+)(in) + 2 hydrogencarbonate(in). It catalyses the reaction Cd(2+)(out) + 2 hydrogencarbonate(out) = Cd(2+)(in) + 2 hydrogencarbonate(in). In terms of biological role, electroneutral transporter of the plasma membrane mediating the cellular uptake of the divalent metal cations zinc, manganese and iron that are important for tissue homeostasis, metabolism, development and immunity. Functions as an energy-dependent symporter, transporting through the membranes an electroneutral complex composed of a divalent metal cation and two bicarbonate anions. Beside these endogenous cellular substrates, can also import cadmium a non-essential metal which is cytotoxic and carcinogenic. This chain is Metal cation symporter ZIP14, found in Bos taurus (Bovine).